The chain runs to 110 residues: Large ribosomal subunit protein uL22 (110 aa).

It belongs to the universal ribosomal protein uL22 family. In terms of assembly, part of the 50S ribosomal subunit.

In terms of biological role, this protein binds specifically to 23S rRNA; its binding is stimulated by other ribosomal proteins, e.g. L4, L17, and L20. It is important during the early stages of 50S assembly. It makes multiple contacts with different domains of the 23S rRNA in the assembled 50S subunit and ribosome. The globular domain of the protein is located near the polypeptide exit tunnel on the outside of the subunit, while an extended beta-hairpin is found that lines the wall of the exit tunnel in the center of the 70S ribosome. The polypeptide is Large ribosomal subunit protein uL22 (Aggregatibacter actinomycetemcomitans (Actinobacillus actinomycetemcomitans)).